The chain runs to 594 residues: Aspartate--tRNA(Asp/Asn) ligase (594 aa).

E175 serves as a coordination point for L-aspartate. Residues 199-202 form an aspartate region; the sequence is QLFK. An L-aspartate-binding site is contributed by R221. ATP-binding positions include 221–223 and Q230; that span reads RDE. H446 is a binding site for L-aspartate. Residue E492 coordinates ATP. R499 is a binding site for L-aspartate. 544–547 contacts ATP; the sequence is GFDR.

Belongs to the class-II aminoacyl-tRNA synthetase family. Type 1 subfamily. In terms of assembly, homodimer.

The protein localises to the cytoplasm. It catalyses the reaction tRNA(Asx) + L-aspartate + ATP = L-aspartyl-tRNA(Asx) + AMP + diphosphate. Its function is as follows. Aspartyl-tRNA synthetase with relaxed tRNA specificity since it is able to aspartylate not only its cognate tRNA(Asp) but also tRNA(Asn). Reaction proceeds in two steps: L-aspartate is first activated by ATP to form Asp-AMP and then transferred to the acceptor end of tRNA(Asp/Asn). The chain is Aspartate--tRNA(Asp/Asn) ligase from Hydrogenobaculum sp. (strain Y04AAS1).